The sequence spans 476 residues: Methylenetetrahydrofolate--tRNA-(uracil-5-)-methyltransferase TrmFO (476 aa).

14–19 (GGGLAG) is an FAD binding site. Residues 428–447 (LTEPPTHGADGKKLRGPEKS) are disordered. The span at 436–447 (ADGKKLRGPEKS) shows a compositional bias: basic and acidic residues.

The protein belongs to the MnmG family. TrmFO subfamily. Requires FAD as cofactor.

It localises to the cytoplasm. It carries out the reaction uridine(54) in tRNA + (6R)-5,10-methylene-5,6,7,8-tetrahydrofolate + NADH + H(+) = 5-methyluridine(54) in tRNA + (6S)-5,6,7,8-tetrahydrofolate + NAD(+). It catalyses the reaction uridine(54) in tRNA + (6R)-5,10-methylene-5,6,7,8-tetrahydrofolate + NADPH + H(+) = 5-methyluridine(54) in tRNA + (6S)-5,6,7,8-tetrahydrofolate + NADP(+). Functionally, catalyzes the folate-dependent formation of 5-methyl-uridine at position 54 (M-5-U54) in all tRNAs. This is Methylenetetrahydrofolate--tRNA-(uracil-5-)-methyltransferase TrmFO from Rhodopseudomonas palustris (strain BisA53).